A 115-amino-acid polypeptide reads, in one-letter code: Transcriptional regulator protein FixT (115 aa).

Interacts directly with FixL.

Prevents transcription of the intermediate key regulatory genes nifA and fixK by counteracting the activity of the FixLJ two-component system. Acts as an inhibitor of the sensor hemoprotein kinase fixL, preventing the production or the accumulation of its phosphorylated form. The chain is Transcriptional regulator protein FixT (fixT) from Rhizobium meliloti (strain 1021) (Ensifer meliloti).